We begin with the raw amino-acid sequence, 601 residues long: Rhizobactin siderophore biosynthesis protein RhbF (601 aa).

This sequence belongs to the IucA/IucC family.

It functions in the pathway siderophore biosynthesis; rhizobactin biosynthesis. This is Rhizobactin siderophore biosynthesis protein RhbF (rhbF) from Rhizobium meliloti (strain 1021) (Ensifer meliloti).